The sequence spans 375 residues: N5-carboxyaminoimidazole ribonucleotide synthase (375 aa).

ATP is bound by residues arginine 108, lysine 148, 153 to 159 (GYDGKGQ), 183 to 186 (EQYL), glutamate 191, histidine 214, and 266 to 267 (NE). Residues 112-296 (KQTLLEANTQ…QFDTHILAIT (185 aa)) form the ATP-grasp domain.

Belongs to the PurK/PurT family. As to quaternary structure, homodimer.

It carries out the reaction 5-amino-1-(5-phospho-beta-D-ribosyl)imidazole + hydrogencarbonate + ATP = 5-carboxyamino-1-(5-phospho-D-ribosyl)imidazole + ADP + phosphate + 2 H(+). It participates in purine metabolism; IMP biosynthesis via de novo pathway; 5-amino-1-(5-phospho-D-ribosyl)imidazole-4-carboxylate from 5-amino-1-(5-phospho-D-ribosyl)imidazole (N5-CAIR route): step 1/2. Functionally, catalyzes the ATP-dependent conversion of 5-aminoimidazole ribonucleotide (AIR) and HCO(3)(-) to N5-carboxyaminoimidazole ribonucleotide (N5-CAIR). The sequence is that of N5-carboxyaminoimidazole ribonucleotide synthase from Staphylococcus epidermidis (strain ATCC 35984 / DSM 28319 / BCRC 17069 / CCUG 31568 / BM 3577 / RP62A).